Here is a 127-residue protein sequence, read N- to C-terminus: Riboflavin kinase (127 aa).

10 to 15 (GLGEGK) contributes to the CDP binding site. Residues Thr39 and Asn41 each contribute to the Mg(2+) site. FMN-binding residues include Thr96 and Glu104. 109–112 (IQLR) contacts CDP.

The protein belongs to the archaeal riboflavin kinase family. Mg(2+) is required as a cofactor.

It catalyses the reaction riboflavin + CTP = CDP + FMN + H(+). It functions in the pathway cofactor biosynthesis; FMN biosynthesis; FMN from riboflavin (CTP route): step 1/1. Its function is as follows. Catalyzes the CTP-dependent phosphorylation of riboflavin (vitamin B2) to form flavin mononucleotide (FMN). The protein is Riboflavin kinase of Methanococcus maripaludis (strain DSM 14266 / JCM 13030 / NBRC 101832 / S2 / LL).